Reading from the N-terminus, the 643-residue chain is E3 ubiquitin-protein ligase AMFR (643 aa).

A disordered region spans residues Pro-39–Gly-67. A run of 6 helical transmembrane segments spans residues Leu-82–Ile-102, Phe-122–Val-142, Val-145–Cys-165, Val-186–Ile-206, Thr-215–Leu-235, and His-276–Met-296. An RING-type zinc finger spans residues Cys-341–Arg-379. Residues Ile-429–Ile-449 traverse the membrane as a helical segment. Residues Gln-456–Ile-498 form the CUE domain. Disordered stretches follow at residues Thr-504–Gln-579 and Arg-596–Leu-624. A phosphoserine mark is found at Ser-516, Ser-523, and Ser-542. Positions Thr-548–Asp-563 are enriched in acidic residues. Residues Phe-564–Gln-579 are compositionally biased toward basic and acidic residues. The segment at Val-622–Gln-640 is VCP/p97-interacting motif (VIM).

In terms of assembly, interacts with RNF5. Also forms an ERAD complex containing VCP/p97, NGLY1; PSMC1; SAKS1 and RAD23B required for coupling retrotranslocation, ubiquitination and deglycosylation. Interacts with DERL1. Interacts (through a region distinct from the RING finger) with UBE2G2/UBC7. Component of the VCP/p97-AMFR/gp78 complex that enhances VCP/p97 binding to polyubiquitinated proteins for their degradation by the endoplasmic reticulum-associated degradation (ERAD) pathway. Interacts (via the VIM) with VCP/p97. Interacts (via its membrane domain) with INSIG1; the interaction initiates the sterol-mediated ubiquitination and degradation of HMGCR by the ERAD pathway. Interacts with AUP1, UBE2G2 and RNF139/TRC8; interaction with AUP1 facilitates interaction of AMFR with ubiquitin-conjugating enzyme UBE2G2 and ubiquitin ligase RNF139, leading to sterol-induced ubiquitination of HMGCR and its subsequent proteasomal degradation. Interacts with BAG6. Interacts with USP13 (via UBA 2 domain); the interaction is direct. Interacts with LMBR1L. Interacts with UBAC2 and CTNNB1. Interacts with C18orf32. As to quaternary structure, (Microbial infection) Interacts with Staphylococcus aureus HIgB; this interaction regulates AMFR-mediated inflammation by promoting TAB3 ubiquitination to promote TAB3-TAK1 complex formation. In terms of processing, palmitoylation of the RING-type zing finger by ZDHHC6 promotes localization to the peripheral endoplasmic reticulum. As to expression, widely expressed.

The protein localises to the endoplasmic reticulum membrane. It catalyses the reaction [E2 ubiquitin-conjugating enzyme]-S-ubiquitinyl-L-cysteine + [acceptor protein]-L-cysteine = [E2 ubiquitin-conjugating enzyme]-L-cysteine + [acceptor protein]-S-ubiquitinyl-L-cysteine.. The protein operates within protein modification; protein ubiquitination. Functionally, E3 ubiquitin-protein ligase that mediates the polyubiquitination of lysine and cysteine residues on target proteins, such as CD3D, CYP3A4, CFTR, INSIG1, SOAT2/ACAT2 and APOB for proteasomal degradation. Component of a VCP/p97-AMFR/gp78 complex that participates in the final step of endoplasmic reticulum-associated degradation (ERAD). The VCP/p97-AMFR/gp78 complex is involved in the sterol-accelerated ERAD degradation of HMGCR through binding to the HMGCR-INSIG1 complex at the ER membrane. In addition, interaction of AMFR with AUP1 facilitates interaction of AMFR with ubiquitin-conjugating enzyme UBE2G2 and ubiquitin ligase RNF139, leading to sterol-induced HMGCR ubiquitination. The ubiquitinated HMGCR is then released from the ER into the cytosol for subsequent destruction. In addition to ubiquitination on lysine residues, catalyzes ubiquitination on cysteine residues: together with INSIG1, mediates polyubiquitination of SOAT2/ACAT2 at 'Cys-277', leading to its degradation when the lipid levels are low. Catalyzes ubiquitination and subsequent degradation of INSIG1 when cells are depleted of sterols. Mediates polyubiquitination of INSIG2 at 'Cys-215' in some tissues, leading to its degradation. Also regulates ERAD through the ubiquitination of UBL4A a component of the BAG6/BAT3 complex. Also acts as a scaffold protein to assemble a complex that couples ubiquitination, retranslocation and deglycosylation. Mediates tumor invasion and metastasis as a receptor for the GPI/autocrine motility factor. In association with LMBR1L and UBAC2, negatively regulates the canonical Wnt signaling pathway in the lymphocytes by promoting the ubiquitin-mediated degradation of CTNNB1 and Wnt receptors FZD6 and LRP6. Regulates NF-kappa-B and MAPK signaling pathways by mediating 'Lys-27'-linked polyubiquitination of TAB3 and promoting subsequent TAK1/MAP3K7 activation. Required for proper lipid homeostasis. The protein is E3 ubiquitin-protein ligase AMFR of Homo sapiens (Human).